The following is a 411-amino-acid chain: Acetylornithine aminotransferase, mitochondrial (411 aa).

K262 bears the N6-(pyridoxal phosphate)lysine mark.

This sequence belongs to the class-III pyridoxal-phosphate-dependent aminotransferase family. Requires pyridoxal 5'-phosphate as cofactor.

The protein localises to the mitochondrion matrix. It carries out the reaction N(2)-acetyl-L-ornithine + 2-oxoglutarate = N-acetyl-L-glutamate 5-semialdehyde + L-glutamate. The protein operates within amino-acid biosynthesis; L-arginine biosynthesis; N(2)-acetyl-L-ornithine from L-glutamate: step 4/4. This is Acetylornithine aminotransferase, mitochondrial (ARG8) from Yarrowia lipolytica (strain CLIB 122 / E 150) (Yeast).